Here is a 137-residue protein sequence, read N- to C-terminus: Hydrogenase-4 component J (137 aa).

This sequence to E.coli HycH.

Functionally, possible component of hydrogenase 4. This is Hydrogenase-4 component J from Escherichia coli (strain K12).